A 345-amino-acid polypeptide reads, in one-letter code: Alpha-2-HS-glycoprotein (345 aa).

The first 18 residues, Met1–Ser18, serve as a signal peptide directing secretion. The Cystatin fetuin-A-type 1 domain occupies Ala19–His133. 6 cysteine pairs are disulfide-bonded: Cys32–Cys336, Cys89–Cys100, Cys114–Cys132, Cys146–Cys149, Cys208–Cys219, and Cys230–Cys247. Asn99 carries an N-linked (GlcNAc...) asparagine glycan. Ser134 bears the Phosphoserine mark. A Phosphothreonine modification is found at Thr135. The residue at position 138 (Ser138) is a Phosphoserine. The 107-residue stretch at Lys144–Phe250 folds into the Cystatin fetuin-A-type 2 domain. 2 N-linked (GlcNAc...) asparagine glycosylation sites follow: Asn156 and Asn176. Residues Ser305, Ser309, Ser312, and Ser314 each carry the phosphoserine modification. The tract at residues Ser312–Pro334 is disordered.

This sequence belongs to the fetuin family. Post-translationally, phosphorylated by FAM20C in the extracellular medium. As to expression, liver is the major site of synthesis, but fetuin is also expressed in limb buds and other extrahepatic tissues during development.

The protein localises to the secreted. Functionally, probably involved in differentiation. In terms of biological role, (Microbial infection) Facilitates invasion of hepatocytes by Plasmodium berghei sporozoites. This Mus musculus (Mouse) protein is Alpha-2-HS-glycoprotein (Ahsg).